The sequence spans 367 residues: Flagellar P-ring protein (367 aa).

The first 22 residues, 1–22, serve as a signal peptide directing secretion; sequence MRRMLVIRWILAIHLIATQVFA.

This sequence belongs to the FlgI family. In terms of assembly, the basal body constitutes a major portion of the flagellar organelle and consists of four rings (L,P,S, and M) mounted on a central rod.

The protein resides in the periplasm. It is found in the bacterial flagellum basal body. Assembles around the rod to form the L-ring and probably protects the motor/basal body from shearing forces during rotation. This Legionella pneumophila (strain Lens) protein is Flagellar P-ring protein.